Reading from the N-terminus, the 1706-residue chain is Serine/threonine-protein kinase vps15 (1706 aa).

In terms of domain architecture, Protein kinase spans 24–293 (YHNERSLGDS…YLQKYRGTVF (270 aa)). ATP-binding positions include 30–38 (LGDSHFLRT) and lysine 52. The stretch at 56–94 (NKLPEISLSSIVNLLKEEQENISYRVPNAVPYIKTLVTL) is one HEAT 1 repeat. Aspartate 146 serves as the catalytic Proton acceptor. HEAT repeat units lie at residues 426–465 (LYGA…NICD), 466–504 (ESKL…NVTS), 511–549 (FLFQ…QASK), 587–625 (HDLV…FFGK), 626–664 (AKSN…FIGP), 665–703 (RSVD…LHLF), and 705–743 (KLVV…SFDD). Residue serine 957 is modified to Phosphoserine. Position 958 is a phosphotyrosine (tyrosine 958). The disordered stretch occupies residues 982–1099 (TTKPKDVSQS…GKSLAPLISS (118 aa)). Composition is skewed to basic and acidic residues over residues 984 to 1002 (KPKD…RESN) and 1014 to 1023 (DVYRQTDNPE). A compositionally biased stretch (polar residues) spans 1029–1055 (DTASSKVDTHNPTVTQPTDDTGGLNSY). Low complexity predominate over residues 1056–1069 (NTENPLLTNNTLEP). A compositionally biased stretch (basic and acidic residues) spans 1079 to 1090 (KDSDKHAKESKG). WD repeat units follow at residues 1213–1252 (LLDG…RHIS) and 1368–1407 (LQCG…LSCS). The segment covering 1431–1442 (NEYTSGNNNSPV) has biased composition (polar residues). The interval 1431-1461 (NEYTSGNNNSPVTKVPGSSSTSSSSTQPINS) is disordered. The stretch at 1577-1622 (CISSPIYRYRGPSAGSVEREPLFLIAASGSPHAFIWNPHNVSASSS) is one WD 3 repeat.

This sequence belongs to the protein kinase superfamily. Ser/Thr protein kinase family. Component of the autophagy-specific vps34 PI3-kinase complex I composed of vps15, atg6, pik3/vps34, atg14 and atg38. Also a component of the vps34 PI3-kinase complex II composed of atg6, pik3, vps15 and vps38.

It carries out the reaction L-seryl-[protein] + ATP = O-phospho-L-seryl-[protein] + ADP + H(+). The enzyme catalyses L-threonyl-[protein] + ATP = O-phospho-L-threonyl-[protein] + ADP + H(+). Functionally, functions as a part of the autophagy-specific VPS34 PI3-kinase complex I that plays a role in autophagosome assembly. This complex is essential to recruit the atg8-phosphatidylinositol conjugate and the atg12-atg5 conjugate to the pre-autophagosomal structure. Also functions as part of the VPS34 PI3-kinase complex II. The protein is Serine/threonine-protein kinase vps15 of Schizosaccharomyces pombe (strain 972 / ATCC 24843) (Fission yeast).